The primary structure comprises 227 residues: NADH-quinone oxidoreductase subunit C (227 aa).

Belongs to the complex I 30 kDa subunit family. NDH-1 is composed of 14 different subunits. Subunits NuoB, C, D, E, F, and G constitute the peripheral sector of the complex.

It is found in the cell inner membrane. It catalyses the reaction a quinone + NADH + 5 H(+)(in) = a quinol + NAD(+) + 4 H(+)(out). In terms of biological role, NDH-1 shuttles electrons from NADH, via FMN and iron-sulfur (Fe-S) centers, to quinones in the respiratory chain. The immediate electron acceptor for the enzyme in this species is believed to be ubiquinone. Couples the redox reaction to proton translocation (for every two electrons transferred, four hydrogen ions are translocated across the cytoplasmic membrane), and thus conserves the redox energy in a proton gradient. The chain is NADH-quinone oxidoreductase subunit C from Coxiella burnetii (strain RSA 331 / Henzerling II).